The sequence spans 147 residues: uncharacterized protein (147 aa).

The next 2 membrane-spanning stretches (helical) occupy residues 21–41 and 67–87; these read LMLW…IVFV and ALFG…SIPL.

The protein resides in the cell membrane. This is an uncharacterized protein from Ureaplasma parvum serovar 3 (strain ATCC 700970).